We begin with the raw amino-acid sequence, 282 residues long: Bifunctional protein FolD (282 aa).

Residues 165–167 and serine 190 contribute to the NADP(+) site; that span reads GRS.

Belongs to the tetrahydrofolate dehydrogenase/cyclohydrolase family. As to quaternary structure, homodimer.

It catalyses the reaction (6R)-5,10-methylene-5,6,7,8-tetrahydrofolate + NADP(+) = (6R)-5,10-methenyltetrahydrofolate + NADPH. The catalysed reaction is (6R)-5,10-methenyltetrahydrofolate + H2O = (6R)-10-formyltetrahydrofolate + H(+). It participates in one-carbon metabolism; tetrahydrofolate interconversion. In terms of biological role, catalyzes the oxidation of 5,10-methylenetetrahydrofolate to 5,10-methenyltetrahydrofolate and then the hydrolysis of 5,10-methenyltetrahydrofolate to 10-formyltetrahydrofolate. In Macrococcus caseolyticus (strain JCSC5402) (Macrococcoides caseolyticum), this protein is Bifunctional protein FolD.